The sequence spans 59 residues: Large ribosomal subunit protein uL30 (59 aa).

Belongs to the universal ribosomal protein uL30 family. As to quaternary structure, part of the 50S ribosomal subunit.

In Bacillus licheniformis (strain ATCC 14580 / DSM 13 / JCM 2505 / CCUG 7422 / NBRC 12200 / NCIMB 9375 / NCTC 10341 / NRRL NRS-1264 / Gibson 46), this protein is Large ribosomal subunit protein uL30.